Reading from the N-terminus, the 62-residue chain is Small EDRK-rich factor 1 (62 aa).

2 stretches are compositionally biased toward basic and acidic residues: residues 1–30 and 50–62; these read MARGNQRELARQKNMKKSQEISKGKRKEDS and AANERKSMQTREK. The tract at residues 1–62 is disordered; the sequence is MARGNQRELA…ERKSMQTREK (62 aa).

This sequence belongs to the SERF family. Interacts with SNCA; this interaction promotes the aggregation of SNCA.

It is found in the cytoplasm. The protein resides in the cytosol. The protein localises to the nucleus. Its function is as follows. Positive regulator of amyloid protein aggregation and proteotoxicity. Induces conformational changes in amyloid proteins, such as APP, HTT, and SNCA, driving them into compact formations preceding the formation of aggregates. The chain is Small EDRK-rich factor 1 (SERF1) from Bos taurus (Bovine).